A 135-amino-acid polypeptide reads, in one-letter code: uncharacterized protein (135 aa).

The next 3 helical transmembrane spans lie at 12–32, 68–88, and 98–118; these read IPIL…YNGI, SMIG…AKFC, and GILY…FYLF.

The protein localises to the cell membrane. This is an uncharacterized protein from Methanocaldococcus jannaschii (strain ATCC 43067 / DSM 2661 / JAL-1 / JCM 10045 / NBRC 100440) (Methanococcus jannaschii).